A 280-amino-acid chain; its full sequence is 3-methyl-2-oxobutanoate hydroxymethyltransferase (280 aa).

2 residues coordinate Mg(2+): aspartate 61 and aspartate 100. Residues 61–62, aspartate 100, and lysine 130 each bind 3-methyl-2-oxobutanoate; that span reads DS. Glutamate 132 contributes to the Mg(2+) binding site. Glutamate 198 functions as the Proton acceptor in the catalytic mechanism.

This sequence belongs to the PanB family. As to quaternary structure, homodecamer; pentamer of dimers. It depends on Mg(2+) as a cofactor.

The protein resides in the cytoplasm. The catalysed reaction is 3-methyl-2-oxobutanoate + (6R)-5,10-methylene-5,6,7,8-tetrahydrofolate + H2O = 2-dehydropantoate + (6S)-5,6,7,8-tetrahydrofolate. Its pathway is cofactor biosynthesis; (R)-pantothenate biosynthesis; (R)-pantoate from 3-methyl-2-oxobutanoate: step 1/2. In terms of biological role, catalyzes the reversible reaction in which hydroxymethyl group from 5,10-methylenetetrahydrofolate is transferred onto alpha-ketoisovalerate to form ketopantoate. This Mycolicibacterium vanbaalenii (strain DSM 7251 / JCM 13017 / BCRC 16820 / KCTC 9966 / NRRL B-24157 / PYR-1) (Mycobacterium vanbaalenii) protein is 3-methyl-2-oxobutanoate hydroxymethyltransferase.